The sequence spans 501 residues: Dye-decolorizing peroxidase (501 aa).

The signal sequence occupies residues 1 to 21 (MRLSPSFLSLALVIFVGEVVA). Residues 22–60 (RNVVARASNPASVTGTRKVSLLKNVAGLPAVPTAQQVAV) constitute a propeptide that is removed on maturation. Catalysis depends on Asp228, which acts as the Proton acceptor. Residue Asn352 is glycosylated (N-linked (GlcNAc...) asparagine). A heme-binding site is contributed by His367. Asn403 is a glycosylation site (N-linked (GlcNAc...) asparagine).

The protein belongs to the DyP-type peroxidase family. Requires heme b as cofactor.

It is found in the secreted. The enzyme catalyses Reactive Blue 5 + 2 H2O2 = 2,2'-disulfonyl azobenzene + 3-[(4-amino-6-chloro-1,3,5-triazin-2-yl)amino]benzenesulfonate + phthalate + 2 H2O + 2 H(+). The catalysed reaction is 2 a phenolic donor + H2O2 = 2 a phenolic radical donor + 2 H2O. In terms of biological role, manganese-independent peroxidase that is able to convert a large number of compounds, but its physiological substrate is not known. In addition to classic peroxidase substrates (e.g. 2,6-dimethoxyphenol), oxidizes dyes such as Reactive Blue 5 and Reactive Black 5. The polypeptide is Dye-decolorizing peroxidase (Exidia glandulosa (Black witch's butter)).